We begin with the raw amino-acid sequence, 101 residues long: Large ribosomal subunit protein bL25 (101 aa).

Belongs to the bacterial ribosomal protein bL25 family. Part of the 50S ribosomal subunit; part of the 5S rRNA/L5/L18/L25 subcomplex. Contacts the 5S rRNA. Binds to the 5S rRNA independently of L5 and L18.

Its function is as follows. This is one of the proteins that binds to the 5S RNA in the ribosome where it forms part of the central protuberance. The sequence is that of Large ribosomal subunit protein bL25 from Thermosynechococcus vestitus (strain NIES-2133 / IAM M-273 / BP-1).